The following is an 86-amino-acid chain: Photosystem I reaction center subunit PsaK (86 aa).

2 helical membrane passes run 15-35 (SWSI…IGLG) and 57-77 (GLPE…GAII).

Belongs to the PsaG/PsaK family.

Its subcellular location is the plastid. The protein resides in the chloroplast thylakoid membrane. In Gracilaria tenuistipitata var. liui (Red alga), this protein is Photosystem I reaction center subunit PsaK.